Here is a 481-residue protein sequence, read N- to C-terminus: Glutamate--tRNA ligase (481 aa).

A 'HIGH' region motif is present at residues 9-19; it reads PSPTGNLHIGT. The 'KMSKS' region signature appears at 247-251; the sequence is KLSKR. K250 contacts ATP.

It belongs to the class-I aminoacyl-tRNA synthetase family. Glutamate--tRNA ligase type 1 subfamily. As to quaternary structure, monomer.

The protein resides in the cytoplasm. It catalyses the reaction tRNA(Glu) + L-glutamate + ATP = L-glutamyl-tRNA(Glu) + AMP + diphosphate. Its function is as follows. Catalyzes the attachment of glutamate to tRNA(Glu) in a two-step reaction: glutamate is first activated by ATP to form Glu-AMP and then transferred to the acceptor end of tRNA(Glu). The polypeptide is Glutamate--tRNA ligase (Nostoc punctiforme (strain ATCC 29133 / PCC 73102)).